A 338-amino-acid polypeptide reads, in one-letter code: Glutamate/glutamine/aspartate/asparagine-binding protein BztA (338 aa).

The N-terminal stretch at 1–22 (MKKSAFFGSVALAALVAGAASA) is a signal peptide.

The protein belongs to the bacterial solute-binding protein 3 family.

It localises to the periplasm. Its function is as follows. Part of a binding-protein-dependent transport system for glutamate, glutamine, aspartate and asparagine. The polypeptide is Glutamate/glutamine/aspartate/asparagine-binding protein BztA (bztA) (Rhodobacter capsulatus (strain ATCC BAA-309 / NBRC 16581 / SB1003)).